The chain runs to 66 residues: Large ribosomal subunit protein bL31 (66 aa).

Residues Cys-16, Cys-18, Cys-36, and Cys-39 each coordinate Zn(2+).

Belongs to the bacterial ribosomal protein bL31 family. Type A subfamily. In terms of assembly, part of the 50S ribosomal subunit. Zn(2+) serves as cofactor.

In terms of biological role, binds the 23S rRNA. This is Large ribosomal subunit protein bL31 from Campylobacter fetus subsp. fetus (strain 82-40).